Consider the following 417-residue polypeptide: Phosphoglycerate kinase 2 (417 aa).

The residue at position 2 (S2) is an N-acetylserine. 2 positions are modified to phosphoserine: S2 and S4. K11 carries the post-translational modification N6-acetyllysine. (2R)-3-phosphoglycerate-binding residues include V23, D24, F25, N26, Q38, and R39. N6-acetyllysine is present on K48. S62, H63, G65, and R66 together coordinate (2R)-3-phosphoglycerate. K75, K86, and K97 each carry N6-acetyllysine. (2R)-3-phosphoglycerate contacts are provided by L122 and R123. An N6-acetyllysine mark is found at K131 and K146. Residues H170 and R171 each coordinate (2R)-3-phosphoglycerate. Y196 carries the post-translational modification Phosphotyrosine. Residue K199 is modified to N6-acetyllysine. G214 contributes to the ADP binding site. Residue G214 coordinates CDP. 2 residues coordinate AMP: A215 and K216. A215 lines the ATP pocket. A215 contributes to the Mg(2+) binding site. Positions 218 and 219 each coordinate Mg(2+). Residue D219 participates in CDP binding. K220 contacts AMP. K220 provides a ligand contact to ATP. G238 contributes to the ADP binding site. G238 is a binding site for CDP. AMP is bound at residue G239. G239 provides a ligand contact to ATP. K267 and K291 each carry N6-acetyllysine. G313 contributes to the AMP binding site. Residue G313 participates in ATP binding. G338, V340, and F343 together coordinate CDP. F343 contacts ADP. E344 serves as a coordination point for AMP. ATP-binding residues include E344, D375, and T376. D375 contacts Mg(2+).

Belongs to the phosphoglycerate kinase family. Monomer. The cofactor is Mg(2+).

The protein localises to the cytoplasm. The enzyme catalyses (2R)-3-phosphoglycerate + ATP = (2R)-3-phospho-glyceroyl phosphate + ADP. It functions in the pathway carbohydrate degradation; glycolysis; pyruvate from D-glyceraldehyde 3-phosphate: step 2/5. In terms of biological role, essential for sperm motility and male fertility but is not required for the completion of spermatogenesis. This Equus caballus (Horse) protein is Phosphoglycerate kinase 2 (PGK2).